The following is a 173-amino-acid chain: U1 small nuclear ribonucleoprotein C (173 aa).

The segment at 4–36 adopts a Matrin-type zinc-finger fold; the sequence is YYCDYCDTYLTHDSPSVRKTHCQGRKHKDNVKF. Residues 72–100 form a disordered region; sequence AAIPPPANMQGPPRPVPPGPMGPGPNMLG. Residues 73-94 are compositionally biased toward pro residues; that stretch reads AIPPPANMQGPPRPVPPGPMGP.

Belongs to the U1 small nuclear ribonucleoprotein C family. In terms of assembly, U1 snRNP is composed of the 7 core Sm proteins B/B', D1, D2, D3, E, F and G that assemble in a heptameric protein ring on the Sm site of the small nuclear RNA to form the core snRNP, and at least 3 U1 snRNP-specific proteins U1-70K, U1-A and U1-C. U1-C interacts with U1 snRNA and the 5' splice-site region of the pre-mRNA.

The protein localises to the nucleus. In terms of biological role, component of the spliceosomal U1 snRNP, which is essential for recognition of the pre-mRNA 5' splice-site and the subsequent assembly of the spliceosome. U1-C is directly involved in initial 5' splice-site recognition for both constitutive and regulated alternative splicing. The interaction with the 5' splice-site seems to precede base-pairing between the pre-mRNA and the U1 snRNA. Stimulates commitment or early (E) complex formation by stabilizing the base pairing of the 5' end of the U1 snRNA and the 5' splice-site region. The sequence is that of U1 small nuclear ribonucleoprotein C from Pediculus humanus subsp. corporis (Body louse).